Consider the following 386-residue polypeptide: 2,3-diketo-5-methylthiopentyl-1-phosphate enolase (386 aa).

The Proton acceptor role is filled by lysine 85. Residues lysine 131, 157-160 (KDDE), histidine 248, glycine 316, and 338-339 (GT) each bind substrate. The Mg(2+) site is built by lysine 157, aspartate 159, and glutamate 160. Position 157 is an N6-carboxylysine (lysine 157).

The protein belongs to the RuBisCO large chain family. Type IV subfamily. Homodimer. Requires Mg(2+) as cofactor.

It catalyses the reaction 5-methylsulfanyl-2,3-dioxopentyl phosphate = 2-hydroxy-5-methylsulfanyl-3-oxopent-1-enyl phosphate. It participates in amino-acid biosynthesis; L-methionine biosynthesis via salvage pathway; L-methionine from S-methyl-5-thio-alpha-D-ribose 1-phosphate: step 3/6. Catalyzes the enolization of 2,3-diketo-5-methylthiopentyl-1-phosphate (DK-MTP-1-P) into 2-hydroxy-3-keto-5-methylthiopentenyl-1-phosphate (HK-MTPenyl-1-P). This chain is 2,3-diketo-5-methylthiopentyl-1-phosphate enolase, found in Microcystis aeruginosa (strain NIES-843 / IAM M-2473).